The sequence spans 276 residues: 4-diphosphocytidyl-2-C-methyl-D-erythritol kinase (276 aa).

The active site involves Lys-13. Residue 94–104 (PHAGGIGGGSA) participates in ATP binding. Asp-131 is an active-site residue.

The protein belongs to the GHMP kinase family. IspE subfamily.

It carries out the reaction 4-CDP-2-C-methyl-D-erythritol + ATP = 4-CDP-2-C-methyl-D-erythritol 2-phosphate + ADP + H(+). The protein operates within isoprenoid biosynthesis; isopentenyl diphosphate biosynthesis via DXP pathway; isopentenyl diphosphate from 1-deoxy-D-xylulose 5-phosphate: step 3/6. Its function is as follows. Catalyzes the phosphorylation of the position 2 hydroxy group of 4-diphosphocytidyl-2C-methyl-D-erythritol. This chain is 4-diphosphocytidyl-2-C-methyl-D-erythritol kinase, found in Jannaschia sp. (strain CCS1).